We begin with the raw amino-acid sequence, 193 residues long: MINKSFFEIMLVLLASSTGFSRELKLVLSQQRRVNRESLKLLNKLQTSSIQQCLPHRKNFLLPQKSMNPHQYQKQQALAILHEMLQQIFSLFRAVISLDGWEESHMEEFLVELHQQLEYLEALMRLQAEQKSDTLCSENLTLQVKMYFQRIRDYLENQDYSSCAWTIVRVEINRCLFFVFQLTGKLSKQGMEP.

Residues 1 to 21 (MINKSFFEIMLVLLASSTGFS) form the signal peptide. Cysteine 53 and cysteine 163 are joined by a disulfide. Asparagine 139 is a glycosylation site (N-linked (GlcNAc...) asparagine).

It belongs to the alpha/beta interferon family.

It localises to the secreted. Functionally, type I interferon required for maintaining basal levels of IFN-regulated genes, including 2'-5'-oligoadenylate synthetase, IRF7 and ISG15, in the female reproductive tract. Directly mediates protection against viral and bacterial genital infections. This chain is Interferon epsilon (IFNE), found in Sus scrofa (Pig).